The chain runs to 250 residues: uncharacterized protein (250 aa).

Positions Met-1–Ala-24 are cleaved as a signal peptide. Residue Cys-25 is the site of N-palmitoyl cysteine attachment. Cys-25 is lipidated: S-diacylglycerol cysteine. The region spanning Arg-44–Tyr-200 is the TNase-like domain.

It localises to the cell membrane. This is an uncharacterized protein from Mycoplasma genitalium (strain ATCC 33530 / DSM 19775 / NCTC 10195 / G37) (Mycoplasmoides genitalium).